Here is a 539-residue protein sequence, read N- to C-terminus: Chaperonin GroEL (539 aa).

Residues 29–32, 86–90, Gly-413, and Asp-492 contribute to the ATP site; these read TLGP and DGTTT.

This sequence belongs to the chaperonin (HSP60) family. In terms of assembly, forms a cylinder of 14 subunits composed of two heptameric rings stacked back-to-back. Interacts with the co-chaperonin GroES.

The protein resides in the cytoplasm. It catalyses the reaction ATP + H2O + a folded polypeptide = ADP + phosphate + an unfolded polypeptide.. In terms of biological role, together with its co-chaperonin GroES, plays an essential role in assisting protein folding. The GroEL-GroES system forms a nano-cage that allows encapsulation of the non-native substrate proteins and provides a physical environment optimized to promote and accelerate protein folding. The sequence is that of Chaperonin GroEL from Fusobacterium nucleatum subsp. nucleatum (strain ATCC 25586 / DSM 15643 / BCRC 10681 / CIP 101130 / JCM 8532 / KCTC 2640 / LMG 13131 / VPI 4355).